Reading from the N-terminus, the 108-residue chain is UPF0060 membrane protein YnfA (108 aa).

At 1 to 5 (MLKTT) the chain is on the periplasmic side. A helical transmembrane segment spans residues 6–26 (LLFFVTALCEIIGCFLTWLWI). Residues 27 to 30 (KRGA) lie on the Cytoplasmic side of the membrane. A helical membrane pass occupies residues 31-51 (SVWWLLPAAASLALFVWLLTL). At 52–60 (HPAASGRVY) the chain is on the periplasmic side. Residues 61-81 (AAYGGVYVCTALLWLRVVDGV) form a helical membrane-spanning segment. Topologically, residues 82–84 (RLT) are cytoplasmic. Residues 85 to 105 (VYDWCGAPIALCGMLIIVVGW) form a helical membrane-spanning segment. The Periplasmic segment spans residues 106 to 108 (GRT).

The protein belongs to the UPF0060 family.

Its subcellular location is the cell inner membrane. In Salmonella dublin (strain CT_02021853), this protein is UPF0060 membrane protein YnfA.